The primary structure comprises 485 residues: MKFLQIIPVLLSLTSTTLAQSFCSSASHSGQSVKETGNKVGTIGGVGYELWADSGNNSATFYSDGSFSCTFQNAGDYLCRSGLSFDSTKTPSQIGRMKADFKLVKQNISNVGYSYVGVYGWTRSPLVEYYIVDNWLSPSPPGDWVGNKKHGSFTIDGAQYTVYENTRTGPSIDGNTTFKQYFSIRQQARDCGTIDISAHFDQWEKLGMTMGKLHEAKVLGEAGNGNGGVSGTADFPYAKVYIGDGNGGGASPAPAGGAPAGGAPAGNDQPQGPQGQQPPQGQQPPQGQQPPQGQQPPQGQQPPQGNDQQGQQPPQGQQPPQGNDQHQGQHPPQPQGPQGGNPGGSDFNNWSQGGSPWGGNQGGSPWGGNQGGNPWGGNQGGSPWGGNQGGSPWGQGNQGGNPWGGNQGGSPWGGNQGGNPWGGNQWGAPQNAAAPQSAAAPQNASDGGNCASLWGQCGGQGYNGPSCCSEGSCKPINEYFHQCQK.

A signal peptide spans 1 to 19 (MKFLQIIPVLLSLTSTTLA). One can recognise a GH11 domain in the interval 34–234 (KETGNKVGTI…GNGGVSGTAD (201 aa)). N-linked (GlcNAc...) asparagine glycosylation is found at Asn56 and Asn107. Glu128 serves as the catalytic Nucleophile. N-linked (GlcNAc...) asparagine glycosylation is present at Asn175. Glu221 serves as the catalytic Proton donor. The interval 250–450 (ASPAPAGGAP…PQNASDGGNC (201 aa)) is disordered. Low complexity-rich tracts occupy residues 265 to 330 (AGND…QGQH) and 344 to 354 (GSDFNNWSQGG). 7 repeat units span residues 275 to 280 (GQQPPQ), 281 to 286 (GQQPPQ), 287 to 292 (GQQPPQ), 293 to 298 (GQQPPQ), 299 to 304 (GQQPPQ), 310 to 315 (GQQPPQ), and 316 to 321 (GQQPPQ). A 7 X 6 AA tandem repeats of G-Q-Q-P-P-Q region spans residues 275-321 (GQQPPQGQQPPQGQQPPQGQQPPQGQQPPQGNDQQGQQPPQGQQPPQ). The N-linked (GlcNAc...) asparagine glycan is linked to Asn349. 8 tandem repeats follow at residues 353–361 (GGSPWGGNQ), 362–370 (GGSPWGGNQ), 371–379 (GGNPWGGNQ), 380–388 (GGSPWGGNQ), 389–397 (GGSPWGQGN), 399–407 (GGNPWGGNQ), 408–416 (GGSPWGGNQ), and 417–425 (GGNPWGGNQ). Positions 353–425 (GGSPWGGNQG…QGGNPWGGNQ (73 aa)) are 8 X 9 AA tandem repeats of G-G-[SN]-P-W-G-G-N-Q. The span at 355–425 (SPWGGNQGGS…QGGNPWGGNQ (71 aa)) shows a compositional bias: gly residues. Positions 426-445 (WGAPQNAAAPQSAAAPQNAS) are enriched in low complexity. N-linked (GlcNAc...) asparagine glycosylation occurs at Asn443. One can recognise a CBM1 domain in the interval 449–484 (NCASLWGQCGGQGYNGPSCCSEGSCKPINEYFHQCQ).

Belongs to the glycosyl hydrolase 11 (cellulase G) family.

It is found in the secreted. The catalysed reaction is Endohydrolysis of (1-&gt;4)-beta-D-xylosidic linkages in xylans.. It participates in glycan degradation; xylan degradation. Endo-1,4-beta-xylanase involved in the hydrolysis of xylan, a major structural heterogeneous polysaccharide found in plant biomass representing the second most abundant polysaccharide in the biosphere, after cellulose. The protein is Endo-1,4-beta-xylanase C (xynC) of Neocallimastix patriciarum (Rumen fungus).